A 296-amino-acid chain; its full sequence is Diaminopimelate epimerase (296 aa).

Positions 17, 49, and 69 each coordinate substrate. The active-site Proton donor is cysteine 78. Substrate is bound by residues 79–80 (GN), asparagine 171, asparagine 205, and 223–224 (ER). Catalysis depends on cysteine 232, which acts as the Proton acceptor. 233–234 (GT) lines the substrate pocket.

The protein belongs to the diaminopimelate epimerase family. Homodimer.

The protein localises to the cytoplasm. It carries out the reaction (2S,6S)-2,6-diaminopimelate = meso-2,6-diaminopimelate. It functions in the pathway amino-acid biosynthesis; L-lysine biosynthesis via DAP pathway; DL-2,6-diaminopimelate from LL-2,6-diaminopimelate: step 1/1. Its function is as follows. Catalyzes the stereoinversion of LL-2,6-diaminopimelate (L,L-DAP) to meso-diaminopimelate (meso-DAP), a precursor of L-lysine and an essential component of the bacterial peptidoglycan. This Methylorubrum extorquens (strain PA1) (Methylobacterium extorquens) protein is Diaminopimelate epimerase.